The primary structure comprises 393 residues: Beta-1,4-galactosyltransferase 3 (393 aa).

At 1 to 10 (MLRRLLERPC) the chain is on the cytoplasmic side. The helical; Signal-anchor for type II membrane protein transmembrane segment at 11 to 31 (TLALLVGSQLAVMMYLSLGGF) threads the bilayer. Residues 32-393 (RSLSALFGRD…ANHTALRGSH (362 aa)) are Lumenal-facing. A glycan (N-linked (GlcNAc...) asparagine) is linked at asparagine 57. Residues cysteine 77 and cysteine 119 are joined by a disulfide bond. 130 to 134 (PHRAR) is a binding site for UDP-alpha-D-galactose. N-linked (GlcNAc...) asparagine glycosylation occurs at asparagine 166. UDP-alpha-D-galactose-binding positions include 169-171 (FNR), 196-197 (VD), tyrosine 226, and tryptophan 258. A disulfide bridge links cysteine 190 with cysteine 209. Aspartate 197 is a Mn(2+) binding site. 260–263 (GEDD) contacts N-acetyl-D-glucosamine. Position 291 (histidine 291) interacts with Mn(2+). A UDP-alpha-D-galactose-binding site is contributed by 291–293 (HRG). An N-acetyl-D-glucosamine-binding site is contributed by arginine 303. N-linked (GlcNAc...) asparagine glycans are attached at residues asparagine 337 and asparagine 385. Residues 339-393 (TADIGTDPRGPRAPSGPRYPPGSSQAFRQEMLQRRPPARPGPLSTANHTALRGSH) form a disordered region.

This sequence belongs to the glycosyltransferase 7 family. The cofactor is Mn(2+). In terms of tissue distribution, found in various tissues. Highest expression in placenta, prostate, testis, ovary, intestine and muscle, and in fetal brain.

It is found in the golgi apparatus. The protein localises to the golgi stack membrane. It catalyses the reaction an N-acetyl-beta-D-glucosaminyl derivative + UDP-alpha-D-galactose = a beta-D-galactosyl-(1-&gt;4)-N-acetyl-beta-D-glucosaminyl derivative + UDP + H(+). The catalysed reaction is N-acetyl-D-glucosamine + UDP-alpha-D-galactose = beta-D-galactosyl-(1-&gt;4)-N-acetyl-D-glucosamine + UDP + H(+). It carries out the reaction a beta-D-GlcNAc-(1-&gt;3)-beta-D-Gal-(1-&gt;4)-beta-D-Glc-(1&lt;-&gt;1)-Cer(d18:1(4E)) + UDP-alpha-D-galactose = a neolactoside nLc4Cer(d18:1(4E)) + UDP + H(+). The enzyme catalyses a beta-D-glucosylceramide + UDP-alpha-D-galactose = a beta-D-galactosyl-(1-&gt;4)-beta-D-glucosyl-(1&lt;-&gt;1)-ceramide + UDP + H(+). It catalyses the reaction a neolactoside IV(3)-beta-GlcNAc-nLc4Cer + UDP-alpha-D-galactose = a neolactoside nLc6Cer + UDP + H(+). The protein operates within protein modification; protein glycosylation. In terms of biological role, responsible for the synthesis of complex-type N-linked oligosaccharides in many glycoproteins as well as the carbohydrate moieties of glycolipids. In Homo sapiens (Human), this protein is Beta-1,4-galactosyltransferase 3.